We begin with the raw amino-acid sequence, 361 residues long: Divinyl chlorophyll a/b light-harvesting protein PcbD (361 aa).

6 helical membrane passes run F27–L47, I93–F113, F140–A160, V201–V221, A248–C268, and L315–L335.

Belongs to the PsbB/PsbC family. IsiA/Pcb subfamily. The antenna complex consists of divinyl chlorophylls (a and b) and divinyl chlorophyll a/b binding proteins and binds more divinyl chlorophyll b than does the antenna complex from high-light-adapted Prochlorococcus. The cofactor is divinyl chlorophyll a. Requires divinyl chlorophyll b as cofactor.

The protein resides in the cellular thylakoid membrane. Functionally, the antenna complex functions as a light receptor, it captures and delivers excitation energy to photosystems II and I. The Prochlorales pcb genes are not related to higher plant LHCs. In Prochlorococcus marinus (strain SARG / CCMP1375 / SS120), this protein is Divinyl chlorophyll a/b light-harvesting protein PcbD (pcbD).